The following is a 388-amino-acid chain: Plasminogen-binding group A streptococcal M-like protein PAM (388 aa).

The first 29 residues, 1–29, serve as a signal peptide directing secretion; sequence RKLKTGTASVAVALTVVGAGLASQTEVKA. The segment at 85-113 is able to bind plasminogen; sequence VEKLTADAELQRLKNERHEEAELERLKSE. The A-1 repeat unit spans residues 91-103; sequence DAELQRLKNERHE. Residues 91-116 form a 2 X approximate tandem repeats, type a region; it reads DAELQRLKNERHEEAELERLKSERHD. Composition is skewed to basic and acidic residues over residues 95 to 137, 145 to 168, 176 to 189, 218 to 231, and 260 to 269; these read QRLK…KQEH, INEKEAEAKEKEAEQKKLKEEKQI, LRRDLDASREAKKQ, and LRRDLDASRE. Disordered stretches follow at residues 95–189, 204–231, and 248–269; these read QRLK…AKKQ, VKEEKQISDASRQGLRRDLDASREAKKQ, and EEKQISDASRQGLRRDLDASRE. Residues 104 to 116 form an A-2 repeat; that stretch reads EAELERLKSERHD. Residues 147 to 153 form a B-1 repeat; the sequence is EKEAEAK. The segment at 147 to 161 is 2 X tandem repeats, type b; it reads EKEAEAKEKEAEQKK. The stretch at 154-159 is one B-2 repeat; that stretch reads EKEAEQ. C repeat units follow at residues 160-194, 202-236, and 244-278; these read KKLKEEKQISDASRQGLRRDLDASREAKKQVEKDL, DKVKEEKQISDASRQGLRRDLDASREAKKQVEKGL, and DKVKEEKQISDASRQGLRRDLDASREAKKQVEKAL. D repeat units follow at residues 311–316, 317–322, 325–330, and 332–337; these read AKLEAE, AKALKE, AKQAEE, and AKLRAE. Positions 331–340 are enriched in basic and acidic residues; that stretch reads LAKLRAEKAS. Residues 331 to 388 are disordered; the sequence is LAKLRAEKASDSQTPDAKPGNKAVPGKGQAPQAGTKPNQNKAPMKETKRQLPSTGETT. Positions 381–385 match the LPXTG sorting signal motif; the sequence is LPSTG. The residue at position 384 (T384) is a Pentaglycyl murein peptidoglycan amidated threonine. A propeptide spans 385–388 (removed by sortase); that stretch reads GETT.

The protein belongs to the M protein family.

Its subcellular location is the secreted. The protein resides in the cell wall. Its function is as follows. Binds to human plasminogen (and plasmin) via its kringle repeats. Also binds to albumin, immunoglobulin G and fibrinogen. Could provide the bacteria with a mechanism for invasion, as streptococcal-bound plasmin could permit tissue penetration. The protein is Plasminogen-binding group A streptococcal M-like protein PAM (pam) of Streptococcus pyogenes.